Consider the following 218-residue polypeptide: THAP domain-containing protein 3 (218 aa).

The THAP-type zinc finger occupies 1-82 (MPKSCAARQC…LKHNAVPTVF (82 aa)). Disordered stretches follow at residues 97 to 120 (GGDS…PEGP) and 133 to 154 (ATEA…PGQP). Ser100 is modified (phosphoserine). Positions 156 to 159 (DHSY) match the HCFC1-binding motif (HBM) motif.

In terms of assembly, component of a THAP1/THAP3-HCFC1-OGT complex that contains at least, either THAP1 or THAP3, HCFC1 and OGT. Interacts directly with OGT and HCFC1 (via its HBM). As to expression, highest levels in heart, liver and kidney. Lower levels in brain and lung.

Component of a THAP1/THAP3-HCFC1-OGT complex that is required for the regulation of the transcriptional activity of RRM1. This Mus musculus (Mouse) protein is THAP domain-containing protein 3 (Thap3).